The following is a 266-amino-acid chain: Small ribosomal subunit protein uS2 (266 aa).

The disordered stretch occupies residues 227–266 (GVSFTEETPSEPIQSDSSEEEEGSLDISDLFEDTDLKEEE). Positions 231–240 (TEETPSEPIQ) are enriched in polar residues. Residues 243–266 (SSEEEEGSLDISDLFEDTDLKEEE) show a composition bias toward acidic residues.

Belongs to the universal ribosomal protein uS2 family.

This Pseudothermotoga lettingae (strain ATCC BAA-301 / DSM 14385 / NBRC 107922 / TMO) (Thermotoga lettingae) protein is Small ribosomal subunit protein uS2.